The chain runs to 809 residues: Glycerol-3-phosphate acyltransferase (809 aa).

Positions 309-314 match the HXXXXD motif motif; it reads HRSHMD.

It belongs to the GPAT/DAPAT family.

The protein localises to the cell inner membrane. The enzyme catalyses sn-glycerol 3-phosphate + an acyl-CoA = a 1-acyl-sn-glycero-3-phosphate + CoA. Its pathway is phospholipid metabolism; CDP-diacylglycerol biosynthesis; CDP-diacylglycerol from sn-glycerol 3-phosphate: step 1/3. The chain is Glycerol-3-phosphate acyltransferase from Shewanella oneidensis (strain ATCC 700550 / JCM 31522 / CIP 106686 / LMG 19005 / NCIMB 14063 / MR-1).